Reading from the N-terminus, the 389-residue chain is TelA-like protein SH1505 (389 aa).

It belongs to the TelA family.

The chain is TelA-like protein SH1505 from Staphylococcus haemolyticus (strain JCSC1435).